The chain runs to 255 residues: Fumarate reductase cytochrome b subunit (255 aa).

5 consecutive transmembrane segments (helical) span residues T33–I53, I78–L98, W126–V146, F168–Y188, and V208–I228. Heme b is bound by residues H44, H93, H143, and H182.

Belongs to the diheme cytochrome b FrdC family. In terms of assembly, part of an enzyme complex containing three subunits: a flavoprotein (frdA), an iron-sulfur protein (frdB), and diheme cytochrome b (frdC). Heme b is required as a cofactor.

The protein resides in the cell inner membrane. In terms of biological role, the fumarate reductase enzyme complex is required for fumarate respiration. This subunit anchors the complex in the membrane and binds a diheme cytochrome b. The protein is Fumarate reductase cytochrome b subunit (frdC) of Helicobacter pylori (strain ATCC 700392 / 26695) (Campylobacter pylori).